A 174-amino-acid polypeptide reads, in one-letter code: Dehydratase AgnL8 (174 aa).

The substrate site is built by tyrosine 24, tyrosine 44, and phenylalanine 47. Active-site residues include histidine 79 and histidine 104.

This sequence belongs to the scytalone dehydratase family. Homotrimer. Each subunit contains an active site, located in the central part of the hydrophobic core of the monomer, which functions independently.

Its pathway is secondary metabolite biosynthesis. In terms of biological role, dehydratase; part of the gene cluster that mediates the biosynthesis of agnestins, dihydroxy-xanthone metabolites. The pathway begins with the assembly and cyclization of atrochrysone thioester by the non-reducing polyketide synthase Agnpks1. The atrochrysone carboxyl ACP thioesterase AgnL7 then breaks the thioester bond and releases the atrochrysone carboxylic acid as the first enzyme-free intermediate. The decarboxylase AgnL1 then catalyzes the concerted decarboxylation-elimination required to convert atochrysone carboxylic acid into emodin anthrone, which is further oxidized to emodin by the anthrone oxygenase AgnL2. Emodin then undergoes reduction catalyzed by the oxidoreductase AgnL4 to yield the dihydroquinone tautomer which is the substrate for reduction by the short chain dehydrogenase AgnL6 reduction to produce hydroxyketone, followed by AgnL8 dehydration and likely spontaneous autoxidation to chrysophanol. Baeyer-Villiger oxidation by the oxidase AgnL3 leads to monodictyphenone via cleavage of the C-10/C-10a bond of chrysophanol. Alternative cleavage at the C-4a/C-10 bond of chrysophanol also leads to the formation some cephalone F. Further conversion to agnestins A and B, requires reduction to dihydro-monodictyphenone, oxidation to agnestin C probably via an epoxide, and rearrangement to either agnestin A or agnestin B directly, although agnestin A or agnestin B can also interconvert. Within the cluster, AgnR1 is the only unassigned oxidoreductase present which could be involved in this conversion. However, AgnR1 seems not to be involved in this step, and thus genes involved in the proposed oxidation/reduction may be located elsewhere on the genome. Further agnestin A derivatives are probably formed by spontaneous decarboxylations, dehydrations and methanolysis reactions. The protein is Dehydratase AgnL8 of Paecilomyces divaricatus (Penicillium divaricatum).